We begin with the raw amino-acid sequence, 152 residues long: SsrA-binding protein (152 aa).

The disordered stretch occupies residues 122 to 152 (KGKKNHDKRETEAARDWQRDKARLMKGDRGD). Positions 128–152 (DKRETEAARDWQRDKARLMKGDRGD) are enriched in basic and acidic residues.

It belongs to the SmpB family.

The protein localises to the cytoplasm. Its function is as follows. Required for rescue of stalled ribosomes mediated by trans-translation. Binds to transfer-messenger RNA (tmRNA), required for stable association of tmRNA with ribosomes. tmRNA and SmpB together mimic tRNA shape, replacing the anticodon stem-loop with SmpB. tmRNA is encoded by the ssrA gene; the 2 termini fold to resemble tRNA(Ala) and it encodes a 'tag peptide', a short internal open reading frame. During trans-translation Ala-aminoacylated tmRNA acts like a tRNA, entering the A-site of stalled ribosomes, displacing the stalled mRNA. The ribosome then switches to translate the ORF on the tmRNA; the nascent peptide is terminated with the 'tag peptide' encoded by the tmRNA and targeted for degradation. The ribosome is freed to recommence translation, which seems to be the essential function of trans-translation. This Caulobacter sp. (strain K31) protein is SsrA-binding protein.